A 180-amino-acid polypeptide reads, in one-letter code: MIVIGLGNPGEKYSNTRHNVGFMVLDRLSNSWKKGPNYLYSDINISGEKIKLIKPMTYMNLSGEVFKYLPHDDIIVVYDDLDLPLGKIRIRKNGSAGGHNGIKSIISFIGQDFPRIRVGIGPKPENIDAADYVLSNFTKEEFEVLDKIINLCTEAIEYIVENGIDKAMNRYNSIEISTGK.

Position 13 (Y13) interacts with tRNA. H18 (proton acceptor) is an active-site residue. TRNA is bound by residues Y58, N60, and N100.

Belongs to the PTH family. As to quaternary structure, monomer.

It is found in the cytoplasm. The catalysed reaction is an N-acyl-L-alpha-aminoacyl-tRNA + H2O = an N-acyl-L-amino acid + a tRNA + H(+). Functionally, hydrolyzes ribosome-free peptidyl-tRNAs (with 1 or more amino acids incorporated), which drop off the ribosome during protein synthesis, or as a result of ribosome stalling. Catalyzes the release of premature peptidyl moieties from peptidyl-tRNA molecules trapped in stalled 50S ribosomal subunits, and thus maintains levels of free tRNAs and 50S ribosomes. The sequence is that of Peptidyl-tRNA hydrolase from Fervidobacterium nodosum (strain ATCC 35602 / DSM 5306 / Rt17-B1).